Here is a 146-residue protein sequence, read N- to C-terminus: VHWTAEEKQLITGLWGKVNVADCGAEALARLLIVYPWTQRFFASFGNLSSPTAISGNPMVRAHGKKVLTSFGDAVKNLDNIKNTFSQLSELHCDKLHVDPENFRLLGDILIIVLAAHFTKDFTPDCQAAWQKLVRVVAHALARKYH.

Residues 2-146 (HWTAEEKQLI…VAHALARKYH (145 aa)) form the Globin domain. 2 residues coordinate heme b: His63 and His92.

It belongs to the globin family. As to quaternary structure, heterotetramer of two alpha chains and two beta chains. In terms of tissue distribution, red blood cells.

Involved in oxygen transport from the lung to the various peripheral tissues. In Chloephaga melanoptera (Andean goose), this protein is Hemoglobin subunit beta (HBB).